The sequence spans 687 residues: Mitochondrial 15S rRNA processing factor ppr3 (687 aa).

The transit peptide at 1 to 49 (MLNKCSGSLTLLAVRRFCGPCRRLHYHKDNPNNINIAKNLLNNNIQARC) directs the protein to the mitochondrion. PPR repeat units follow at residues 262–296 (NGLV…SITP), 297–331 (SKDF…ATSI), 334–368 (SAET…PIDP), and 372–407 (TTFV…GLRP).

The protein belongs to the CCM1 family. In terms of assembly, binds to mitochondrial small subunit 15S rRNA.

The protein resides in the mitochondrion. Functionally, regulates mitochondrial small subunit maturation by controlling 15S rRNA 5'-end processing. Localizes to the 5' precursor of the 15S rRNA in a position that is subsequently occupied by mS47 in the mature yeast mtSSU. Uses structure and sequence-specific RNA recognition, binding to a single-stranded region of the precursor and specifically recognizing bases -6 to -1. The exchange of Ccm1 for mS47 is coupled to the irreversible removal of precursor rRNA that is accompanied by conformational changes of the mitoribosomal proteins uS5m and mS26. These conformational changes signal completion of 5'-end rRNA processing through protection of the mature 5'-end of the 15S rRNA and stabilization of mS47. The removal of the 5' precursor together with the dissociation of Ccm1 may be catalyzed by the 5'-3' exoribonuclease Pet127. Involved in the specific removal of group I introns in mitochondrial encoded transcripts. The polypeptide is Mitochondrial 15S rRNA processing factor ppr3 (Schizosaccharomyces pombe (strain 972 / ATCC 24843) (Fission yeast)).